The following is a 371-amino-acid chain: Neutral protease 2 homolog MGYG_03465 (371 aa).

Residues 1–19 (MQFVAVLAALGALVAPAAA) form the signal peptide. Positions 20–188 (YPHAPMNETL…SIHARALEKR (169 aa)) are excised as a propeptide. 2 disulfides stabilise this stretch: Cys-196-Cys-267 and Cys-274-Cys-292. Residue His-316 coordinates Zn(2+). Residue Glu-317 is part of the active site. Residues His-320 and Asp-331 each coordinate Zn(2+).

Belongs to the peptidase M35 family. The cofactor is Zn(2+).

The protein resides in the secreted. It carries out the reaction Preferential cleavage of bonds with hydrophobic residues in P1'. Also 3-Asn-|-Gln-4 and 8-Gly-|-Ser-9 bonds in insulin B chain.. Its function is as follows. Secreted metalloproteinase that allows assimilation of proteinaceous substrates. Shows high activities on basic nuclear substrates such as histone and protamine. May be involved in virulence. This is Neutral protease 2 homolog MGYG_03465 from Arthroderma gypseum (strain ATCC MYA-4604 / CBS 118893) (Microsporum gypseum).